The chain runs to 198 residues: UPF0314 protein Saro_1818 (198 aa).

5 consecutive transmembrane segments (helical) span residues 13–33 (GGSL…LGMG), 62–82 (WYSF…HIVW), 96–116 (LALA…PIII), 153–173 (APVL…LWAI), and 177–197 (LALN…WQGG).

The protein belongs to the UPF0314 family.

The protein localises to the cell membrane. This Novosphingobium aromaticivorans (strain ATCC 700278 / DSM 12444 / CCUG 56034 / CIP 105152 / NBRC 16084 / F199) protein is UPF0314 protein Saro_1818.